Reading from the N-terminus, the 542-residue chain is Peptide chain release factor 3 (542 aa).

The 270-residue stretch at Glu-14–Gly-283 folds into the tr-type G domain. Residues Ser-23–Thr-30, Asp-91–His-95, and Asn-145–Asp-148 contribute to the GTP site.

Belongs to the TRAFAC class translation factor GTPase superfamily. Classic translation factor GTPase family. PrfC subfamily.

It is found in the cytoplasm. In terms of biological role, increases the formation of ribosomal termination complexes and stimulates activities of RF-1 and RF-2. It binds guanine nucleotides and has strong preference for UGA stop codons. It may interact directly with the ribosome. The stimulation of RF-1 and RF-2 is significantly reduced by GTP and GDP, but not by GMP. This is Peptide chain release factor 3 from Nostoc punctiforme (strain ATCC 29133 / PCC 73102).